Here is a 117-residue protein sequence, read N- to C-terminus: Large ribosomal subunit protein bL20 (117 aa).

This sequence belongs to the bacterial ribosomal protein bL20 family.

In terms of biological role, binds directly to 23S ribosomal RNA and is necessary for the in vitro assembly process of the 50S ribosomal subunit. It is not involved in the protein synthesizing functions of that subunit. The polypeptide is Large ribosomal subunit protein bL20 (Rickettsia akari (strain Hartford)).